The following is a 326-amino-acid chain: tRNA uridine(34) hydroxylase (326 aa).

The Rhodanese domain maps to glutamate 122–tryptophan 218. The active-site Cysteine persulfide intermediate is the cysteine 178.

It belongs to the TrhO family.

The catalysed reaction is uridine(34) in tRNA + AH2 + O2 = 5-hydroxyuridine(34) in tRNA + A + H2O. Functionally, catalyzes oxygen-dependent 5-hydroxyuridine (ho5U) modification at position 34 in tRNAs. The sequence is that of tRNA uridine(34) hydroxylase from Chlamydia abortus (strain DSM 27085 / S26/3) (Chlamydophila abortus).